The primary structure comprises 61 residues: Metallothionein-2 (61 aa).

An N-acetylmethionine modification is found at Met-1. A beta region spans residues 1-29 (MDPNCSCAAGDSCTCAGSCKCKECKCTSC). A divalent metal cation is bound by residues Cys-5, Cys-7, Cys-13, Cys-15, Cys-19, Cys-21, Cys-24, Cys-26, Cys-29, Cys-33, Cys-34, Cys-36, Cys-37, Cys-41, Cys-44, Cys-48, Cys-50, and Cys-57. Residues 30–61 (KKSCCSCCPVGCAKCAQGCICKGASDKCSCCA) form an alpha region. A Phosphoserine modification is found at Ser-58. A divalent metal cation is bound by residues Cys-59 and Cys-60.

Belongs to the metallothionein superfamily. Type 1 family. Interacts with EOLA1.

In terms of biological role, metallothioneins have a high content of cysteine residues that bind various heavy metals; these proteins are transcriptionally regulated by both heavy metals and glucocorticoids. The sequence is that of Metallothionein-2 from Homo sapiens (Human).